The chain runs to 464 residues: Dihydrolipoyl dehydrogenase (464 aa).

FAD-binding positions include 36–44 (EGAALGGTC), K53, and A119. C44 and C49 are disulfide-bonded. Residues 184 to 188 (GGGYI), E207, and 269 to 272 (AVGR) contribute to the NAD(+) site. FAD is bound by residues D311 and A319. H443 (proton acceptor) is an active-site residue.

Belongs to the class-I pyridine nucleotide-disulfide oxidoreductase family. As to quaternary structure, homodimer. Requires FAD as cofactor.

It is found in the cytoplasm. It carries out the reaction N(6)-[(R)-dihydrolipoyl]-L-lysyl-[protein] + NAD(+) = N(6)-[(R)-lipoyl]-L-lysyl-[protein] + NADH + H(+). Functionally, the branched-chain alpha-keto dehydrogenase complex catalyzes the overall conversion of alpha-keto acids to acyl-CoA and CO(2). It contains multiple copies of 3 enzymatic components: branched-chain alpha-keto acid decarboxylase (E1), lipoamide acyltransferase (E2) and lipoamide dehydrogenase (E3). In Pseudomonas aeruginosa (strain ATCC 15692 / DSM 22644 / CIP 104116 / JCM 14847 / LMG 12228 / 1C / PRS 101 / PAO1), this protein is Dihydrolipoyl dehydrogenase.